We begin with the raw amino-acid sequence, 602 residues long: VIN3-like protein 1 (602 aa).

A disordered region spans residues 1 to 38; that stretch reads MDSSSTKSKISHSRKTNKKSNKKHESNGKQQQQQDVDG. Over residues 9–22 the composition is skewed to basic residues; it reads KISHSRKTNKKSNK. The PHD-type zinc-finger motif lies at 67–137; sequence RCSCCVCHNF…CFCCYSCGKV (71 aa). Positions 144–151 match the Nuclear localization signal motif; it reads WKKQLVAA. One can recognise a Fibronectin type-III domain in the interval 242 to 340; sequence VPAACRFHFE…AMCFTKSVEI (99 aa). Residues 430-470 are disordered; that stretch reads LNEEFTPPDSSGGEDNGVPLNSLAEADGGDHDDNCDDAVSN. A VIN3-Interacting Domain (VID) region spans residues 502–602; that stretch reads AISDSNDSEN…RPNNGVMTSH (101 aa).

In terms of assembly, interacts with VIN3 and VIL2. The heterodimer made of VIN3 and VIL1 is required for establishing the vernalization-induced epigenetic silencing of FLC. Component of the plant homeodomain / polycomb repressive complex 2 (PHD-PRC2) large complex during prolonged cold, composed of core PRC2 components (VRN2, EZA1, FIE and MSI1), and three related PHD finger proteins (VIL1, VIL2 and VIN3) that mediates histone H3 trimethylation on 'Lys-27' (H3K27me3). Accumulates in shoot and root apices, and in leaves.

The protein resides in the nucleus. Its subcellular location is the nucleus speckle. Its function is as follows. Involved in both the vernalization and photoperiod pathways by regulating expression of the related floral repressors FLOWERING LOCUS C (FLC) and FLOWERING LOCUS M (FLM). Together with VIN3, required during vernalization for the modifications of FLC and FLM chromatin that are associated with an epigenetically silenced state (e.g. chromatin modifications, histone deacetylation, and trimethylated H3 'Lys-4' H3K4me3 and 'Lys-27' H3K27me3) and with acquisition of competence to flower. Promotes flowering in short days (SD=8 hours light/16 hours dark). Associates dynamically at FLC locus; during vernalization, binds to specific sites, but when in warm conditions, distributed along the whole locus. The chain is VIN3-like protein 1 (VIL1) from Arabidopsis thaliana (Mouse-ear cress).